The chain runs to 1847 residues: Peripheral-type benzodiazepine receptor-associated protein 1 (1847 aa).

Disordered stretches follow at residues 57 to 81 (EESS…GTET), 282 to 318 (NQRE…EDDV), and 560 to 626 (SGPK…DTAS). Low complexity-rich tracts occupy residues 294 to 310 (GSTA…GAPG) and 600 to 613 (SLSN…IHNS). An SH3 1 domain is found at 651–718 (ARIQVFLARY…PSNFVERVSD (68 aa)). Positions 728–787 (ELADSSHSSGPELSFLSGGGGGCSSGGQSSGGRSQPRPEEEATGDELSLSPPPEGLGEPL) are disordered. Over residues 744–757 (SGGGGGCSSGGQSS) the composition is skewed to gly residues. 3 Fibronectin type-III domains span residues 789 to 880 (VPYP…AGAG), 882 to 974 (VPSQ…TLPA), and 979 to 1077 (APLD…PALA). Disordered stretches follow at residues 1107–1174 (LGYT…EGPD), 1191–1215 (DAGP…VCHR), 1240–1307 (NSLV…ILEQ), 1322–1478 (FSIP…ESSL), and 1514–1616 (PTDG…SHQD). Over residues 1122–1133 (TQDSPASLSTEM) the composition is skewed to polar residues. The span at 1203–1215 (LTQKEPSTEVCHR) shows a compositional bias: basic and acidic residues. The span at 1253-1266 (DIQEEEEEEEEEEE) shows a compositional bias: acidic residues. The span at 1272–1284 (WSFQKQVAGNSIG) shows a compositional bias: polar residues. 2 stretches are compositionally biased toward acidic residues: residues 1296 to 1305 (CETDSDEEIL) and 1325 to 1335 (PEEEEEEDEEE). Over residues 1340 to 1352 (PGPSSSSQDPSQP) the composition is skewed to low complexity. Composition is skewed to basic and acidic residues over residues 1412-1421 (RPQDPREHCS) and 1546-1578 (AWEK…ESRG). One can recognise an SH3 2 domain in the interval 1617–1685 (LPLRVFVALF…PCNMVAEVAV (69 aa)). Disordered stretches follow at residues 1701-1747 (PPNV…PGPP) and 1818-1847 (LEGP…RVQC). In terms of domain architecture, SH3 3 spans 1756-1823 (KTSRPMVAAF…PSNFLEGPGP (68 aa)).

It belongs to the RIMBP family. Interacts with RIMS1 and RIMS2. Interacts with TSPO. Interacts with CACNA1A. Specifically expressed in brain. High expression level in the limbic system such as the nucleus accumbens, septum, and hippocampus, as well as on the cerebellum and pineal gland. Abundant in the CA1 region of the hippocampus.

It is found in the cytoplasm. The protein resides in the mitochondrion. In terms of biological role, required for synaptic transmission regulation. It probably controls the recruitement of voltage-gated calcium channels to the presynaptic membrane, and modulates neurotransmitter release. This Rattus norvegicus (Rat) protein is Peripheral-type benzodiazepine receptor-associated protein 1.